Reading from the N-terminus, the 240-residue chain is MHPTEPPFQRIQFYLTAQYDCSYLPGRLARSQVATPTHLIDHHAYGALIRAGFRRSGQFTYRPNCEGCQACVPVRVDVSGFVPNRTQRRCLKRNRGLAARFLPLDFKDEHYALYRAYLGSRHAGGGMDRDGPEQYTQFLLSSNVDSVLVEFRDGDAVVMVAVIDQVDDGLSAVYTFFDPAREQDSLGVYGVLWQIELAKRLDLPYLYLGYWIGESRKMAYKKQYPPLQGLVDGSWQALEA.

The protein belongs to the R-transferase family. Bpt subfamily.

Its subcellular location is the cytoplasm. The catalysed reaction is N-terminal L-glutamyl-[protein] + L-leucyl-tRNA(Leu) = N-terminal L-leucyl-L-glutamyl-[protein] + tRNA(Leu) + H(+). It carries out the reaction N-terminal L-aspartyl-[protein] + L-leucyl-tRNA(Leu) = N-terminal L-leucyl-L-aspartyl-[protein] + tRNA(Leu) + H(+). Functions in the N-end rule pathway of protein degradation where it conjugates Leu from its aminoacyl-tRNA to the N-termini of proteins containing an N-terminal aspartate or glutamate. The sequence is that of Aspartate/glutamate leucyltransferase from Thiobacillus denitrificans (strain ATCC 25259 / T1).